Reading from the N-terminus, the 201-residue chain is UPF0323 lipoprotein Cj0371 (201 aa).

The signal sequence occupies residues 1 to 26; that stretch reads MKKIKKIIQIGMIGGLAAVAGGALAG. The N-palmitoyl cysteine moiety is linked to residue Cys-27. Residue Cys-27 is the site of S-diacylglycerol cysteine attachment. Positions 169-201 are disordered; it reads NKAGTTSSASSAKKSGFFGGGSKATSSSSSFGS. Low complexity-rich tracts occupy residues 170 to 184 and 191 to 201; these read KAGT…KKSG and KATSSSSSFGS.

The protein belongs to the UPF0323 family.

Its subcellular location is the cell membrane. This is UPF0323 lipoprotein Cj0371 from Campylobacter jejuni subsp. jejuni serotype O:2 (strain ATCC 700819 / NCTC 11168).